A 594-amino-acid polypeptide reads, in one-letter code: UV-stimulated scaffold protein A homolog (594 aa).

The segment at 24–170 is VHS-like; it reads RKNLNRFIRE…VTLKKTKFVD (147 aa). Positions 170–198 form a coiled coil; the sequence is DYENGAKKIEAERKRKKILEERKMKMIEN. The UVSSA-type zinc finger occupies 466 to 493; it reads RKVCLAKMKSGKLCPRKDYYTCPLHGKI. 4 residues coordinate Zn(2+): cysteine 469, cysteine 479, cysteine 487, and histidine 490. Positions 503–540 form a coiled coil; it reads INEEDRLEENYRKEQNHLKEADKIRQMIEKEYESKTKR. Positions 533-558 are disordered; it reads EYESKTKRRKKHDVDTTASEDVRNRL. The span at 544–558 shows a compositional bias: basic and acidic residues; the sequence is HDVDTTASEDVRNRL.

Belongs to the UVSSA family.

The protein resides in the chromosome. Factor involved in transcription-coupled nucleotide excision repair (TC-NER) in response to UV damage. TC-NER allows RNA polymerase II-blocking lesions to be rapidly removed from the transcribed strand of active genes. This chain is UV-stimulated scaffold protein A homolog, found in Caenorhabditis elegans.